The sequence spans 350 residues: Enoyl-[acyl-carrier-protein] reductase, mitochondrial (350 aa).

The transit peptide at methionine 1–tyrosine 14 directs the protein to the mitochondrion. The Proton donor role is filled by tyrosine 69. NADP(+)-binding positions include asparagine 143, asparagine 169 to valine 172, arginine 192 to glycine 194, tyrosine 261 to methionine 264, phenylalanine 286 to leucine 288, and lysine 343.

It belongs to the zinc-containing alcohol dehydrogenase family. Quinone oxidoreductase subfamily. Homodimer.

The protein localises to the mitochondrion. The catalysed reaction is a 2,3-saturated acyl-[ACP] + NADP(+) = a (2E)-enoyl-[ACP] + NADPH + H(+). Catalyzes the NADPH-dependent reduction of trans-2-enoyl thioesters in mitochondrial fatty acid synthesis (fatty acid synthesis type II). Fatty acid chain elongation in mitochondria uses acyl carrier protein (ACP) as an acyl group carrier, but the enzyme accepts both ACP and CoA thioesters as substrates in vitro. In Dictyostelium discoideum (Social amoeba), this protein is Enoyl-[acyl-carrier-protein] reductase, mitochondrial (mecr).